The sequence spans 972 residues: Structural polyprotein (972 aa).

Aspartate 26 contacts a divalent metal cation. The 226-residue stretch at 509–734 folds into the Peptidase S50 domain; it reads SGSEAGSYSK…YLGQLMRTTA (226 aa). The active-site Nucleophile is serine 633. The active site involves lysine 674. Disordered regions lie at residues 797–817 and 917–972; these read STPP…AQEA and GGRG…DGEV. Residues 801–817 show a composition bias toward basic and acidic residues; the sequence is KHQEKPKGPDQHTAQEA.

As to quaternary structure, homotrimer. A central divalent metal (possibly cobalt) stabilizes the VP2 trimer. Homodimer. interacts (via C-terminus) with VP1 in the cytoplasm. Interacts with VP2. Specific enzymatic cleavages yield mature proteins. Capsid assembly seems to be regulated by polyprotein processing. The protease VP4 cleaves itself off the polyprotein, thus releasing pre-VP2 and VP3 within the infected cell. During capsid assembly, the C-terminus of pre-VP2 is further processed by VP4, giving rise to VP2, the external capsid protein and three small peptides that all stay closely associated with the capsid.

Its subcellular location is the virion. It localises to the host cytoplasm. Its function is as follows. Capsid protein VP2 self assembles to form an icosahedral capsid with a T=13 symmetry, about 70 nm in diameter, and consisting of 260 VP2 trimers. The capsid encapsulates the genomic dsRNA. VP2 is also involved in attachment and entry into the host cell. In terms of biological role, the precursor of VP2 plays an important role in capsid assembly. First, pre-VP2 and VP2 oligomers assemble to form a procapsid. Then, the pre-VP2 intermediates may be processed into VP2 proteins by proteolytic cleavage mediated by VP4 to obtain the mature virion. The final capsid is composed of pentamers and hexamers but VP2 has a natural tendency to assemble into all-pentameric structures. Therefore pre-VP2 may be required to allow formation of the hexameric structures. Functionally, protease VP4 is a serine protease that cleaves the polyprotein into its final products. Pre-VP2 is first partially cleaved, and may be completely processed by VP4 upon capsid maturation. Capsid protein VP3 plays a key role in virion assembly by providing a scaffold for the capsid composed of VP2. May self-assemble to form a T=4-like icosahedral inner-capsid composed of at least 180 trimers. Plays a role in genomic RNA packaging by recruiting VP1 into the capsid and interacting with the dsRNA genome segments to form a ribonucleoprotein complex. Additionally, the interaction of the VP3 C-terminal tail with VP1 removes the inherent structural blockade of the polymerase active site. Thus, VP3 can also function as a transcriptional activator. Its function is as follows. Structural peptide 1 is a small peptide derived from the C-terminus of pre-VP2. It destabilizes and perforates cell membranes, suggesting a role during viral entry. In terms of biological role, structural peptide 2 is a small peptide derived from the C-terminus of pre-VP2. It is not essential for virus viability, but viral growth is affected when this protein is absent. Functionally, structural peptide 3 is a small peptide derived from pre-VP2 C-terminus. It is not essential for virus viability, but viral growth is affected when this protein is absent. The chain is Structural polyprotein from Oncorhynchus mykiss (Rainbow trout).